A 214-amino-acid polypeptide reads, in one-letter code: Proteasome subunit beta (214 aa).

The propeptide at 1–11 (MLDTSQEIMKG) is removed in mature form; by autocatalysis. T12 functions as the Nucleophile in the catalytic mechanism.

It belongs to the peptidase T1B family. The 20S proteasome core is composed of 14 alpha and 14 beta subunits that assemble into four stacked heptameric rings, resulting in a barrel-shaped structure. The two inner rings, each composed of seven catalytic beta subunits, are sandwiched by two outer rings, each composed of seven alpha subunits. The catalytic chamber with the active sites is on the inside of the barrel. Has a gated structure, the ends of the cylinder being occluded by the N-termini of the alpha-subunits. Is capped at one or both ends by the proteasome regulatory ATPase, PAN.

The protein localises to the cytoplasm. It catalyses the reaction Cleavage of peptide bonds with very broad specificity.. With respect to regulation, the formation of the proteasomal ATPase PAN-20S proteasome complex, via the docking of the C-termini of PAN into the intersubunit pockets in the alpha-rings, triggers opening of the gate for substrate entry. Interconversion between the open-gate and close-gate conformations leads to a dynamic regulation of the 20S proteasome proteolysis activity. Its function is as follows. Component of the proteasome core, a large protease complex with broad specificity involved in protein degradation. This is Proteasome subunit beta from Methanoculleus marisnigri (strain ATCC 35101 / DSM 1498 / JR1).